Here is a 523-residue protein sequence, read N- to C-terminus: UDP-glucuronosyltransferase 3A1 (523 aa).

The N-terminal stretch at 1–23 is a signal peptide; sequence MAVGRKSLILSLLIQHFVLLHGA. The Extracellular portion of the chain corresponds to 24 to 483; it reads KILTVCFLGG…YSYQQPLYQQ (460 aa). Asn-125 carries N-linked (GlcNAc...) asparagine glycosylation. Residues 484–504 traverse the membrane as a helical segment; that stretch reads YLLDVFLFVCVCVIGACYLTV. Over 505–523 the chain is Cytoplasmic; it reads KLLKMFIQKLCSFRKLKQN.

Belongs to the UDP-glycosyltransferase family.

It localises to the membrane. It carries out the reaction glucuronate acceptor + UDP-alpha-D-glucuronate = acceptor beta-D-glucuronoside + UDP + H(+). UDP-glucuronosyltransferases catalyze phase II biotransformation reactions in which lipophilic substrates are conjugated with glucuronic acid to increase water solubility and enhance excretion. They are of major importance in the conjugation and subsequent elimination of potentially toxic xenobiotics and endogenous compounds. In Xenopus laevis (African clawed frog), this protein is UDP-glucuronosyltransferase 3A1 (ugt3a1).